Here is a 337-residue protein sequence, read N- to C-terminus: Holliday junction branch migration complex subunit RuvB (337 aa).

The interval 1-182 (MEDRMVSASY…FGVLSAMEFY (182 aa)) is large ATPase domain (RuvB-L). ATP-binding residues include Leu21, Arg22, Gly63, Lys66, Thr67, Thr68, Arg172, Tyr182, and Arg219. A Mg(2+)-binding site is contributed by Thr67. Positions 183 to 253 (NEDELKEIIL…IAKNALSLLE (71 aa)) are small ATPAse domain (RuvB-S). The interval 256–337 (GEGFDKIDNK…REFKEQTKLT (82 aa)) is head domain (RuvB-H). The DNA site is built by Arg311 and Arg316.

Belongs to the RuvB family. As to quaternary structure, homohexamer. Forms an RuvA(8)-RuvB(12)-Holliday junction (HJ) complex. HJ DNA is sandwiched between 2 RuvA tetramers; dsDNA enters through RuvA and exits via RuvB. An RuvB hexamer assembles on each DNA strand where it exits the tetramer. Each RuvB hexamer is contacted by two RuvA subunits (via domain III) on 2 adjacent RuvB subunits; this complex drives branch migration. In the full resolvosome a probable DNA-RuvA(4)-RuvB(12)-RuvC(2) complex forms which resolves the HJ.

The protein localises to the cytoplasm. The catalysed reaction is ATP + H2O = ADP + phosphate + H(+). In terms of biological role, the RuvA-RuvB-RuvC complex processes Holliday junction (HJ) DNA during genetic recombination and DNA repair, while the RuvA-RuvB complex plays an important role in the rescue of blocked DNA replication forks via replication fork reversal (RFR). RuvA specifically binds to HJ cruciform DNA, conferring on it an open structure. The RuvB hexamer acts as an ATP-dependent pump, pulling dsDNA into and through the RuvAB complex. RuvB forms 2 homohexamers on either side of HJ DNA bound by 1 or 2 RuvA tetramers; 4 subunits per hexamer contact DNA at a time. Coordinated motions by a converter formed by DNA-disengaged RuvB subunits stimulates ATP hydrolysis and nucleotide exchange. Immobilization of the converter enables RuvB to convert the ATP-contained energy into a lever motion, pulling 2 nucleotides of DNA out of the RuvA tetramer per ATP hydrolyzed, thus driving DNA branch migration. The RuvB motors rotate together with the DNA substrate, which together with the progressing nucleotide cycle form the mechanistic basis for DNA recombination by continuous HJ branch migration. Branch migration allows RuvC to scan DNA until it finds its consensus sequence, where it cleaves and resolves cruciform DNA. This Clostridium novyi (strain NT) protein is Holliday junction branch migration complex subunit RuvB.